The primary structure comprises 295 residues: Farnesyl diphosphate synthase (295 aa).

Positions 46, 49, and 78 each coordinate isopentenyl diphosphate. Positions 85 and 91 each coordinate Mg(2+). Residue Arg-96 coordinates (2E)-geranyl diphosphate. Arg-97 lines the isopentenyl diphosphate pocket. Residues Lys-180, Thr-181, Gln-220, and Lys-237 each coordinate (2E)-geranyl diphosphate.

Belongs to the FPP/GGPP synthase family. Mg(2+) is required as a cofactor.

The protein resides in the cytoplasm. It catalyses the reaction isopentenyl diphosphate + (2E)-geranyl diphosphate = (2E,6E)-farnesyl diphosphate + diphosphate. The sequence is that of Farnesyl diphosphate synthase (ispA) from Haemophilus influenzae (strain ATCC 51907 / DSM 11121 / KW20 / Rd).